Here is a 383-residue protein sequence, read N- to C-terminus: L-lactate dehydrogenase (383 aa).

Positions 1–380 (MIISSTFDYR…THESLASTDA (380 aa)) constitute an FMN hydroxy acid dehydrogenase domain. Substrate is bound at residue Tyr-24. FMN-binding residues include Ser-106 and Gln-127. Tyr-129 contacts substrate. Thr-155 serves as a coordination point for FMN. Residue Arg-164 coordinates substrate. Lys-251 contacts FMN. His-275 serves as the catalytic Proton acceptor. Arg-278 contacts substrate. 306 to 330 (DSGVRSGLDVVRMIAQGADAVMIGR) is a binding site for FMN.

The protein belongs to the FMN-dependent alpha-hydroxy acid dehydrogenase family. FMN serves as cofactor.

It localises to the cell inner membrane. It carries out the reaction (S)-lactate + A = pyruvate + AH2. Its function is as follows. Catalyzes the conversion of L-lactate to pyruvate. Is coupled to the respiratory chain. The protein is L-lactate dehydrogenase of Bartonella quintana (strain Toulouse) (Rochalimaea quintana).